The following is a 207-amino-acid chain: Thiamine-phosphate synthase (207 aa).

Residues 36 to 40 and Asn68 contribute to the 4-amino-2-methyl-5-(diphosphooxymethyl)pyrimidine site; that span reads QLRLK. 2 residues coordinate Mg(2+): Asp69 and Asp88. Residue Thr107 coordinates 4-amino-2-methyl-5-(diphosphooxymethyl)pyrimidine. 134-136 is a binding site for 2-[(2R,5Z)-2-carboxy-4-methylthiazol-5(2H)-ylidene]ethyl phosphate; the sequence is TGT. Lys137 serves as a coordination point for 4-amino-2-methyl-5-(diphosphooxymethyl)pyrimidine. Gly164 provides a ligand contact to 2-[(2R,5Z)-2-carboxy-4-methylthiazol-5(2H)-ylidene]ethyl phosphate.

This sequence belongs to the thiamine-phosphate synthase family. It depends on Mg(2+) as a cofactor.

It catalyses the reaction 2-[(2R,5Z)-2-carboxy-4-methylthiazol-5(2H)-ylidene]ethyl phosphate + 4-amino-2-methyl-5-(diphosphooxymethyl)pyrimidine + 2 H(+) = thiamine phosphate + CO2 + diphosphate. The enzyme catalyses 2-(2-carboxy-4-methylthiazol-5-yl)ethyl phosphate + 4-amino-2-methyl-5-(diphosphooxymethyl)pyrimidine + 2 H(+) = thiamine phosphate + CO2 + diphosphate. The catalysed reaction is 4-methyl-5-(2-phosphooxyethyl)-thiazole + 4-amino-2-methyl-5-(diphosphooxymethyl)pyrimidine + H(+) = thiamine phosphate + diphosphate. It participates in cofactor biosynthesis; thiamine diphosphate biosynthesis; thiamine phosphate from 4-amino-2-methyl-5-diphosphomethylpyrimidine and 4-methyl-5-(2-phosphoethyl)-thiazole: step 1/1. Its function is as follows. Condenses 4-methyl-5-(beta-hydroxyethyl)thiazole monophosphate (THZ-P) and 2-methyl-4-amino-5-hydroxymethyl pyrimidine pyrophosphate (HMP-PP) to form thiamine monophosphate (TMP). The protein is Thiamine-phosphate synthase of Rhodospirillum centenum (strain ATCC 51521 / SW).